Here is a 143-residue protein sequence, read N- to C-terminus: Transcriptional regulator MraZ (143 aa).

SpoVT-AbrB domains lie at 5–47 (TYTP…PRAE) and 76–119 (TDEQ…DAAA).

The protein belongs to the MraZ family. In terms of assembly, forms oligomers.

It is found in the cytoplasm. It localises to the nucleoid. This chain is Transcriptional regulator MraZ, found in Mycobacterium sp. (strain JLS).